Consider the following 410-residue polypeptide: Cytochrome P450 CYP107DY1 (410 aa).

2 residues coordinate heme: His-106 and Arg-110. Thr-249 and Glu-253 together coordinate substrate. Residues Arg-302, His-358, and Cys-360 each contribute to the heme site.

It belongs to the cytochrome P450 family. Heme is required as a cofactor.

It catalyses the reaction mevastatin + 2 reduced [2Fe-2S]-[ferredoxin] + O2 + 2 H(+) = pravastatin lactone + 2 oxidized [2Fe-2S]-[ferredoxin] + H2O. Functionally, cytochrome P450 whose physiological substrate is unknown. In vitro, is able to catalyze the selective hydroxylation of mevastatin to pravastatin, the widely used therapeutic agent for hypercholesterolemia. The sequence is that of Cytochrome P450 CYP107DY1 from Priestia megaterium (strain ATCC 12872 / QMB1551) (Bacillus megaterium).